The following is a 567-amino-acid chain: Urease subunit alpha (567 aa).

Positions 129–567 (GGVDTHIHWI…LPMAQRYFLF (439 aa)) constitute a Urease domain. H134, H136, and K217 together coordinate Ni(2+). K217 carries the N6-carboxylysine modification. H219 provides a ligand contact to substrate. Ni(2+) is bound by residues H246 and H272. H320 functions as the Proton donor in the catalytic mechanism. D360 contacts Ni(2+).

It belongs to the metallo-dependent hydrolases superfamily. Urease alpha subunit family. Heterotrimer of UreA (gamma), UreB (beta) and UreC (alpha) subunits. Three heterotrimers associate to form the active enzyme. It depends on Ni cation as a cofactor. In terms of processing, carboxylation allows a single lysine to coordinate two nickel ions.

The protein resides in the cytoplasm. It catalyses the reaction urea + 2 H2O + H(+) = hydrogencarbonate + 2 NH4(+). It functions in the pathway nitrogen metabolism; urea degradation; CO(2) and NH(3) from urea (urease route): step 1/1. This is Urease subunit alpha from Citrobacter koseri (strain ATCC BAA-895 / CDC 4225-83 / SGSC4696).